A 221-amino-acid chain; its full sequence is Deoxyribose-phosphate aldolase (221 aa).

Asp96 acts as the Proton donor/acceptor in catalysis. Lys157 (schiff-base intermediate with acetaldehyde) is an active-site residue. The active-site Proton donor/acceptor is Lys185.

It belongs to the DeoC/FbaB aldolase family. DeoC type 1 subfamily.

It is found in the cytoplasm. The catalysed reaction is 2-deoxy-D-ribose 5-phosphate = D-glyceraldehyde 3-phosphate + acetaldehyde. The protein operates within carbohydrate degradation; 2-deoxy-D-ribose 1-phosphate degradation; D-glyceraldehyde 3-phosphate and acetaldehyde from 2-deoxy-alpha-D-ribose 1-phosphate: step 2/2. Catalyzes a reversible aldol reaction between acetaldehyde and D-glyceraldehyde 3-phosphate to generate 2-deoxy-D-ribose 5-phosphate. This chain is Deoxyribose-phosphate aldolase, found in Crocosphaera subtropica (strain ATCC 51142 / BH68) (Cyanothece sp. (strain ATCC 51142)).